A 130-amino-acid chain; its full sequence is Small ribosomal subunit protein uS8 (130 aa).

Belongs to the universal ribosomal protein uS8 family. Part of the 30S ribosomal subunit. Contacts proteins S5 and S12.

One of the primary rRNA binding proteins, it binds directly to 16S rRNA central domain where it helps coordinate assembly of the platform of the 30S subunit. In Buchnera aphidicola subsp. Baizongia pistaciae (strain Bp), this protein is Small ribosomal subunit protein uS8.